The chain runs to 327 residues: uncharacterized protein (327 aa).

A compositionally biased stretch (low complexity) spans 1–17 (MASMAAAIAASRSAVMS). Residues 1 to 22 (MASMAAAIAASRSAVMSGNRPL) are disordered. N-acetylalanine is present on Ala-2. A Phosphoserine modification is found at Ser-37. Positions 76-113 (GPRAPAPRDPGDSEELTRFPGLRGPTGQKVVRFGDEDL) are disordered. Position 129 is a phosphoserine (Ser-129). Residues 134–148 (SISALSIQEPSNGTA) are compositionally biased toward polar residues. The disordered stretch occupies residues 134-299 (SISALSIQEP…PDVRQDDGED (166 aa)). The segment covering 162 to 176 (SQALKSSQGSRSSSL) has biased composition (low complexity). Ser-175 bears the Phosphoserine mark. 2 stretches are compositionally biased toward basic and acidic residues: residues 182–202 (TRKEEEASFWKINAERSRGEG) and 233–252 (PAPKDREAKVERPSTLRQEQ). The residue at position 289 (Ser-289) is a Phosphoserine.

It is found in the cytoplasm. This is an uncharacterized protein from Homo sapiens (Human).